Here is an 87-residue protein sequence, read N- to C-terminus: Small ribosomal subunit protein bS20 (87 aa).

This sequence belongs to the bacterial ribosomal protein bS20 family.

In terms of biological role, binds directly to 16S ribosomal RNA. The protein is Small ribosomal subunit protein bS20 of Mycoplasma pneumoniae (strain ATCC 29342 / M129 / Subtype 1) (Mycoplasmoides pneumoniae).